A 298-amino-acid polypeptide reads, in one-letter code: Ribosomal RNA small subunit methyltransferase H (298 aa).

Residues 38–40 (GGH), aspartate 57, phenylalanine 84, aspartate 100, and glutamine 107 each bind S-adenosyl-L-methionine.

The protein belongs to the methyltransferase superfamily. RsmH family.

The protein localises to the cytoplasm. The catalysed reaction is cytidine(1402) in 16S rRNA + S-adenosyl-L-methionine = N(4)-methylcytidine(1402) in 16S rRNA + S-adenosyl-L-homocysteine + H(+). Functionally, specifically methylates the N4 position of cytidine in position 1402 (C1402) of 16S rRNA. This chain is Ribosomal RNA small subunit methyltransferase H, found in Acaryochloris marina (strain MBIC 11017).